Here is a 209-residue protein sequence, read N- to C-terminus: Mitochondrial import inner membrane translocase subunit Tim23 (209 aa).

A run of 3 helical transmembrane segments spans residues 73-93 (FELA…FGAM), 125-145 (ALWA…GVII), and 172-194 (GGLR…YALY).

This sequence belongs to the Tim17/Tim22/Tim23 family. In terms of assembly, component of the TIM23 complex at least composed of TIMM23, TIMM17 (TIMM17A or TIMM17B) and TIMM50; within this complex, directly interacts with TIMM50. The complex interacts with the TIMM44 component of the PAM complex and with DNAJC15. Upon mitochondrial depolarization, interacts with PINK1; the interaction is required for PINK1 accumulation at the outer mitochondrial membrane, kinase activation by autophosphorylation and PRKN recruitement to mitochondria.

The protein resides in the mitochondrion inner membrane. Functionally, essential component of the TIM23 complex, a complex that mediates the translocation of transit peptide-containing proteins across the mitochondrial inner membrane. Has a role in the activation of stress-induced mitophagy by protecting PINK1 from OMA1-mediated degradation and facilitating its accumulation at the outer mitochondrial membrane in response to depolarization. The sequence is that of Mitochondrial import inner membrane translocase subunit Tim23 (TIMM23) from Bos taurus (Bovine).